Here is a 215-residue protein sequence, read N- to C-terminus: Pyrophosphate-energized proton pump 2 (215 aa).

5 helical membrane-spanning segments follow: residues 16–36 (VYPL…TFFV), 51–71 (GLIA…YATV), 86–106 (GTNL…IVVI), 136–156 (GLAV…GGII), and 164–184 (LFGT…IVAL).

This sequence belongs to the H(+)-translocating pyrophosphatase (TC 3.A.10) family. In terms of assembly, homodimer. It depends on Mg(2+) as a cofactor.

Its subcellular location is the cell inner membrane. It carries out the reaction diphosphate + H2O + H(+)(in) = 2 phosphate + 2 H(+)(out). Functionally, proton pump that utilizes the energy of pyrophosphate hydrolysis as the driving force for proton movement across the membrane. Generates a proton motive force. This chain is Pyrophosphate-energized proton pump 2 (hppA2), found in Rhizobium leguminosarum bv. trifolii.